Reading from the N-terminus, the 177-residue chain is Large ribosomal subunit protein uL6 (177 aa).

It belongs to the universal ribosomal protein uL6 family. In terms of assembly, part of the 50S ribosomal subunit.

In terms of biological role, this protein binds to the 23S rRNA, and is important in its secondary structure. It is located near the subunit interface in the base of the L7/L12 stalk, and near the tRNA binding site of the peptidyltransferase center. The chain is Large ribosomal subunit protein uL6 from Marinomonas sp. (strain MWYL1).